The sequence spans 442 residues: MSHEEDLIDYSDEELQATDAAAGTAAAGANGAAPKKEGDLTVSGARADKKGSYVGIHSTGFRDFLLKGELLRAITDCGFEHPSEVQQVCIPTAILNVDVLCQAKSGLGKTAVFVLTTLHQLEPVPGECSILVMCHTRELAYQIKNEYARFSKYLPDVKTAVFYGGTPMQKDIELLSSKDTYPSIVVGTPGRLNALVRDKKLSLRNIKAFVLDECDKMLDQIDMRRDVQEIFRATPADKQVMMFSATLSQEVRPICKKFMRNPLEVYVDDDTKLTLHGLLQYYIKLGESEKNRKLNELLDSLEFNQVIIFVKSTQRASELDKLLRECNFPSIAVHSGVSQEERIKRYKEFKEFNKRICVATDVFGRGIDIERINLAINYDLPADADSYLHRVGRAGRFGTKGLAISFVSSEQDQEVLKDIEKRFEVALPEYPQGGVDSSAYMA.

The short motif at 59 to 87 (TGFRDFLLKGELLRAITDCGFEHPSEVQQ) is the Q motif element. The Helicase ATP-binding domain maps to 90-265 (IPTAILNVDV…KKFMRNPLEV (176 aa)). Position 103–110 (103–110 (AKSGLGKT)) interacts with ATP. The DECD box signature appears at 212 to 215 (DECD). The 146-residue stretch at 293 to 438 (KLNELLDSLE…EYPQGGVDSS (146 aa)) folds into the Helicase C-terminal domain.

It belongs to the DEAD box helicase family. DECD subfamily.

Its subcellular location is the nucleus. It catalyses the reaction ATP + H2O = ADP + phosphate + H(+). Its function is as follows. ATP-binding RNA helicase involved in transcription elongation and required for the export of mRNA out of the nucleus. SUB2 also plays a role in pre-mRNA splicing and spliceosome assembly. May be involved in rDNA and telomeric silencing, and maintenance of genome integrity. The sequence is that of ATP-dependent RNA helicase SUB2 (SUB2) from Ajellomyces capsulatus (strain NAm1 / WU24) (Darling's disease fungus).